The primary structure comprises 212 residues: Guanylate kinase (212 aa).

The 179-residue stretch at 14-192 (GTALVICAPS…AYDELRATYL (179 aa)) folds into the Guanylate kinase-like domain. 21–28 (APSGTGKT) contributes to the ATP binding site.

This sequence belongs to the guanylate kinase family.

It is found in the cytoplasm. The enzyme catalyses GMP + ATP = GDP + ADP. Essential for recycling GMP and indirectly, cGMP. This chain is Guanylate kinase, found in Lawsonia intracellularis (strain PHE/MN1-00).